We begin with the raw amino-acid sequence, 540 residues long: Zinc finger protein 768 (540 aa).

Disordered regions lie at residues 1–166 (MERE…FEAQ) and 239–258 (TGAL…GQGP). A phosphoserine mark is found at Ser17, Ser18, and Ser23. Tyr27 is subject to Phosphotyrosine. Residue Ser33 is modified to Phosphoserine. Positions 34–53 (ENEEEEISQQEGSGDYEVEE) are enriched in acidic residues. Phosphoserine is present on residues Ser62, Ser69, Ser76, Ser83, Ser90, Ser97, Ser104, Ser107, Ser111, Ser118, and Ser125. Residues 62-77 (SPGFEPQSPEFEPQSP) are compositionally biased toward low complexity. Residues 107–119 (SDSQSPEFESQSP) show a composition bias toward polar residues. Tyr128 is modified (phosphotyrosine). Phosphoserine is present on Ser132. Tyr135 carries the phosphotyrosine modification. Ser139 carries the phosphoserine modification. Tyr142 bears the Phosphotyrosine mark. Phosphoserine occurs at positions 144 and 147. Polar residues predominate over residues 149-166 (YESQNTELKTQSPEFEAQ). Position 158 is a phosphothreonine (Thr158). At Ser160 the chain carries Phosphoserine. The C2H2-type 1 zinc-finger motif lies at 261 to 283 (NICGICGKSFGRGSTLIQHQRIH). Thr284 carries the phosphothreonine modification. The residue at position 289 (Tyr289) is a Phosphotyrosine. 4 consecutive C2H2-type zinc fingers follow at residues 289-311 (YKCE…QRTH), 317-339 (YKCP…QRTH), 345-367 (YKCP…QRTH), and 373-395 (YSCT…QRVH). Residues Ser295 and Ser299 each carry the phosphoserine modification. Phosphothreonine is present on Thr396. 5 C2H2-type zinc fingers span residues 401–423 (FSCG…ARSH), 429–451 (FKCP…ARTH), 457–479 (YSCP…QRSH), 485–507 (YRCA…HRVH), and 513–535 (YKCD…QRTH). Ser442 carries the post-translational modification Phosphoserine.

The protein belongs to the krueppel C2H2-type zinc-finger protein family. In terms of assembly, interacts (via zinc-finger domains) with TP53 (via N-terminus); interaction might be facilitated by TP53 oligomerization state. Interacts with ELP3. In terms of processing, may be phosphorylated at residue 'Ser-5' of the tandem heptapeptide repeats in the N-terminus. Phosphorylation might be increased upon RAS pathway activation and negatively regulate protein stability.

It is found in the nucleus. The protein resides in the chromosome. In terms of biological role, binds to mammalian-wide interspersed repeat (MIRs) sequences in euchromatin and promoter regions of genes at the consensus sequence 5'-GCTGTGTG-[N20]-CCTCTCTG-3', consisting of two anchor regions connected by a linker region; the linker region probably does not contribute to the binding specificity. Required for cell homeostasis. May be involved in transcriptional regulation. This chain is Zinc finger protein 768 (ZNF768), found in Homo sapiens (Human).